Reading from the N-terminus, the 430-residue chain is Serine--tRNA ligase (430 aa).

Residue 237 to 239 (TAE) participates in L-serine binding. 268–270 (RSE) is a binding site for ATP. Glutamate 291 provides a ligand contact to L-serine. 355–358 (EISS) lines the ATP pocket. Residue serine 391 participates in L-serine binding.

This sequence belongs to the class-II aminoacyl-tRNA synthetase family. Type-1 seryl-tRNA synthetase subfamily. As to quaternary structure, homodimer. The tRNA molecule binds across the dimer.

It is found in the cytoplasm. It carries out the reaction tRNA(Ser) + L-serine + ATP = L-seryl-tRNA(Ser) + AMP + diphosphate + H(+). It catalyses the reaction tRNA(Sec) + L-serine + ATP = L-seryl-tRNA(Sec) + AMP + diphosphate + H(+). The protein operates within aminoacyl-tRNA biosynthesis; selenocysteinyl-tRNA(Sec) biosynthesis; L-seryl-tRNA(Sec) from L-serine and tRNA(Sec): step 1/1. Its function is as follows. Catalyzes the attachment of serine to tRNA(Ser). Is also able to aminoacylate tRNA(Sec) with serine, to form the misacylated tRNA L-seryl-tRNA(Sec), which will be further converted into selenocysteinyl-tRNA(Sec). In Salmonella heidelberg (strain SL476), this protein is Serine--tRNA ligase.